The primary structure comprises 202 residues: 3-isopropylmalate dehydratase small subunit (202 aa).

It belongs to the LeuD family. LeuD type 1 subfamily. Heterodimer of LeuC and LeuD.

The catalysed reaction is (2R,3S)-3-isopropylmalate = (2S)-2-isopropylmalate. It participates in amino-acid biosynthesis; L-leucine biosynthesis; L-leucine from 3-methyl-2-oxobutanoate: step 2/4. Catalyzes the isomerization between 2-isopropylmalate and 3-isopropylmalate, via the formation of 2-isopropylmaleate. This chain is 3-isopropylmalate dehydratase small subunit, found in Caulobacter vibrioides (strain ATCC 19089 / CIP 103742 / CB 15) (Caulobacter crescentus).